The following is a 180-amino-acid chain: Segregation and condensation protein B (180 aa).

This sequence belongs to the ScpB family. In terms of assembly, homodimer. Homodimerization may be required to stabilize the binding of ScpA to the Smc head domains. Component of a cohesin-like complex composed of ScpA, ScpB and the Smc homodimer, in which ScpA and ScpB bind to the head domain of Smc. The presence of the three proteins is required for the association of the complex with DNA.

Its subcellular location is the cytoplasm. Participates in chromosomal partition during cell division. May act via the formation of a condensin-like complex containing Smc and ScpA that pull DNA away from mid-cell into both cell halves. This Staphylococcus aureus (strain MSSA476) protein is Segregation and condensation protein B.